A 420-amino-acid polypeptide reads, in one-letter code: Carbohydrate sulfotransferase 12 (420 aa).

Topologically, residues 1–5 are cytoplasmic; that stretch reads MAKSR. A helical; Signal-anchor for type II membrane protein membrane pass occupies residues 6 to 26; sequence LFCLLVALGSVFMILFIIVYW. Over 27–420 the chain is Lumenal; that stretch reads DNVGTANLNL…YPKPDDLLSV (394 aa). Asn76 and Asn139 each carry an N-linked (GlcNAc...) asparagine glycan. Residue 176-182 participates in 3'-phosphoadenylyl sulfate binding; sequence PKVACTN. Asn215 is a glycosylation site (N-linked (GlcNAc...) asparagine). 251–259 lines the 3'-phosphoadenylyl sulfate pocket; the sequence is RDPFVRLIS. N-linked (GlcNAc...) asparagine glycans are attached at residues Asn286 and Asn376.

This sequence belongs to the sulfotransferase 2 family.

The protein localises to the golgi apparatus membrane. The catalysed reaction is chondroitin beta-D-glucuronate + n 3'-phosphoadenylyl sulfate = chondroitin 4'-sulfate + n adenosine 3',5'-bisphosphate + n H(+). In terms of biological role, catalyzes the transfer of sulfate to position 4 of the N-acetylgalactosamine (GalNAc) residue of chondroitin and desulfated dermatan sulfate. Chondroitin sulfate constitutes the predominant proteoglycan present in cartilage and is distributed on the surfaces of many cells and extracellular matrices. The protein is Carbohydrate sulfotransferase 12 (chst12) of Xenopus laevis (African clawed frog).